Reading from the N-terminus, the 317-residue chain is MAQNLSCENWLALENILKKYYLSAFYGIEFIVGMLGNFTVVFGYLFCMKNWNSSNVYLFNLSISDLAFLCTLPMLIRSYATGNWTYGDVLCISNRYVLHANLYTSILFLTFISIDRYLLMKFPFREHILQKKEFAILISLAVWVLVTLEVLPMLTFITSTPIEKGDSCVDYASSGNPKYSLIYSLCLTLLGFLIPLSVMCFFYYKMVVFLKKRSQQQATVLSLNKPLRLVVLAVVIFSVLFTPYHIMRNVRIASRLDSWPQGCSQKAIKCLYILTRPLAFLNSAVNPIFYFLVGDHFRDMLFSKLRQYFKSLTSFRL.

At 1–27 (MAQNLSCENWLALENILKKYYLSAFYG) the chain is on the extracellular side. N4 is a glycosylation site (N-linked (GlcNAc...) asparagine). The chain crosses the membrane as a helical span at residues 28–48 (IEFIVGMLGNFTVVFGYLFCM). The Cytoplasmic portion of the chain corresponds to 49–55 (KNWNSSN). The helical transmembrane segment at 56–76 (VYLFNLSISDLAFLCTLPMLI) threads the bilayer. Topologically, residues 77–99 (RSYATGNWTYGDVLCISNRYVLH) are extracellular. C91 and C168 are disulfide-bonded. The chain crosses the membrane as a helical span at residues 100–120 (ANLYTSILFLTFISIDRYLLM). At 121-133 (KFPFREHILQKKE) the chain is on the cytoplasmic side. A helical membrane pass occupies residues 134 to 154 (FAILISLAVWVLVTLEVLPML). The Extracellular portion of the chain corresponds to 155-181 (TFITSTPIEKGDSCVDYASSGNPKYSL). The chain crosses the membrane as a helical span at residues 182 to 202 (IYSLCLTLLGFLIPLSVMCFF). The Cytoplasmic portion of the chain corresponds to 203 to 226 (YYKMVVFLKKRSQQQATVLSLNKP). Residues 227 to 247 (LRLVVLAVVIFSVLFTPYHIM) form a helical membrane-spanning segment. The Extracellular segment spans residues 248 to 276 (RNVRIASRLDSWPQGCSQKAIKCLYILTR). The helical transmembrane segment at 277 to 297 (PLAFLNSAVNPIFYFLVGDHF) threads the bilayer. The Cytoplasmic segment spans residues 298–317 (RDMLFSKLRQYFKSLTSFRL).

It belongs to the G-protein coupled receptor 1 family. In terms of tissue distribution, expressed in retina.

The protein localises to the cell membrane. G protein-coupled receptor for succinate able to mediate signaling through Gq/GNAQ or Gi/GNAI second messengers depending on the cell type and the processes regulated. Succinate-SUCNR1 signaling serves as a link between metabolic stress, inflammation and energy homeostasisn. In macrophages, plays a range of immune-regulatory roles. During inflammation, succinate-SUCNR1 signaling may act as an anti-inflammatory mediator or boost inflammation depending on the inflammatory status of cells. Hyperpolarizes M2 macrophages versus M1 phenotype through Gq signaling by regulating the transcription of genes involved in immune function. In activated M1 macrophages, plays a pro-inflammatory role in response to LPS. Expressed in dendritic cells, where it is involved in the sensing of immunological danger and enhances immunity. Mediates succinate triggered intracelleular calcium mobilization, induces migratory responses and acts in synergy with Toll-like receptor ligands for the production of proinflammatory cytokines as well as an enhancement of antigen-specific activation of helper T cells. In the small intestine, mediates the activation of tuft cells by dietary succinate and triggers type 2 immunity. In adipocytes, plays an important role in the control of energy metabolism. In response to succinate, controls leptin expression in an AMPK-JNK-CEBPA-dependent as well as circadian clock-regulated manner. In muscle tissue, is expressed in non-muscle cells and coordinates muscle remodeling in response to the succinate produced during exercise training in a paracrine manner. In retina, acts as a mediator of vessel growth during retinal development. In response to succinate, regulates the production of angiogenic factors, including VEGF, by retinal ganglion neurons. The protein is Succinate receptor 1 (Sucnr1) of Rattus norvegicus (Rat).